A 363-amino-acid polypeptide reads, in one-letter code: MKFVDEAFIDVAAGDGGNGCVSFRHEKYKEFGGPNGGDGGRGGHVFAVADPNLNTLVDFRYARRHEAKRGGHGMGSDMFGAAGADITLKMPVGTIITDAATGQPLYELLLPGEVITIARGGDGGFGNMRFKSAINRAPRHKTPGWPGEKKSLKLELKVLADVGLLGRPNAGKSTFIAAVSNARPKIADYPFTTLHPHLGVVRVAPEQSFVVADIPGLIEGASEGAGLGLQFLRHLQRTRLLLHIVDLAALDTGVDAQDAGVDPVAQAKAIINELKKYDRQLYDKPRWLVLNKLDMVPAGERQARVQDFVKRLKHQGPVFEISALTHEGCGPLVHAIFGHVQSGQRMDNEPPPLDPRFASAGPA.

Residues 1–159 form the Obg domain; that stretch reads MKFVDEAFID…KSLKLELKVL (159 aa). The 182-residue stretch at 160–341 folds into the OBG-type G domain; the sequence is ADVGLLGRPN…LVHAIFGHVQ (182 aa). GTP-binding positions include 166–173, 191–195, 213–216, 291–294, and 322–324; these read GRPNAGKS, FTTLH, DIPG, NKLD, and SAL. S173 and T193 together coordinate Mg(2+). A disordered region spans residues 343 to 363; that stretch reads GQRMDNEPPPLDPRFASAGPA.

Belongs to the TRAFAC class OBG-HflX-like GTPase superfamily. OBG GTPase family. As to quaternary structure, monomer. Mg(2+) serves as cofactor.

The protein resides in the cytoplasm. Its function is as follows. An essential GTPase which binds GTP, GDP and possibly (p)ppGpp with moderate affinity, with high nucleotide exchange rates and a fairly low GTP hydrolysis rate. Plays a role in control of the cell cycle, stress response, ribosome biogenesis and in those bacteria that undergo differentiation, in morphogenesis control. In Verminephrobacter eiseniae (strain EF01-2), this protein is GTPase Obg.